We begin with the raw amino-acid sequence, 412 residues long: Imidazolonepropionase (412 aa).

2 residues coordinate Fe(3+): His-76 and His-78. 2 residues coordinate Zn(2+): His-76 and His-78. Residues Arg-85, Tyr-148, and His-181 each coordinate 4-imidazolone-5-propanoate. Tyr-148 is a binding site for N-formimidoyl-L-glutamate. His-242 provides a ligand contact to Fe(3+). His-242 serves as a coordination point for Zn(2+). Glu-245 is a 4-imidazolone-5-propanoate binding site. A Fe(3+)-binding site is contributed by Asp-317. Position 317 (Asp-317) interacts with Zn(2+). N-formimidoyl-L-glutamate contacts are provided by Asn-319 and Gly-321. Ser-322 provides a ligand contact to 4-imidazolone-5-propanoate.

It belongs to the metallo-dependent hydrolases superfamily. HutI family. Requires Zn(2+) as cofactor. It depends on Fe(3+) as a cofactor.

The protein resides in the cytoplasm. The catalysed reaction is 4-imidazolone-5-propanoate + H2O = N-formimidoyl-L-glutamate. It participates in amino-acid degradation; L-histidine degradation into L-glutamate; N-formimidoyl-L-glutamate from L-histidine: step 3/3. Its function is as follows. Catalyzes the hydrolytic cleavage of the carbon-nitrogen bond in imidazolone-5-propanoate to yield N-formimidoyl-L-glutamate. It is the third step in the universal histidine degradation pathway. The polypeptide is Imidazolonepropionase (Staphylococcus aureus (strain Mu50 / ATCC 700699)).